A 69-amino-acid chain; its full sequence is Proteinase inhibitor (69 aa).

An N-acetylserine modification is found at Ser-1. Cys-4 and Cys-49 are oxidised to a cystine.

In terms of biological role, in vitro, strong inhibitor of bovine beta-trypsin, weak inhibitor of alpha-chymotrypsin, subtilisin BPN', subtilisin Carlsberg and cathepsin G. This chain is Proteinase inhibitor, found in Linum usitatissimum (Flax).